We begin with the raw amino-acid sequence, 638 residues long: Neuroendocrine convertase 2 (638 aa).

Residues 1 to 25 (MRGGCISQGKAAAGLLFCVMVFASA) form the signal peptide. A propeptide spanning residues 26–109 (ERPVFTNHFL…QQEGFNRKKR (84 aa)) is cleaved from the precursor. One can recognise a Peptidase S8 domain in the interval 129-453 (QWYLINTGQA…YGVLDAGAMV (325 aa)). Catalysis depends on charge relay system residues Asp-167 and His-208. Intrachain disulfides connect Cys-225–Cys-376 and Cys-317–Cys-347. Asn-375 carries an N-linked (GlcNAc...) asparagine glycan. The Charge relay system role is filled by Ser-384. Residues 461 to 597 (TVPERFHCVG…TLMLHGTQSA (137 aa)) enclose the P/Homo B domain. An intrachain disulfide couples Cys-468 to Cys-494. N-linked (GlcNAc...) asparagine glycans are attached at residues Asn-514 and Asn-524.

It belongs to the peptidase S8 family. Furin subfamily.

It localises to the cytoplasmic vesicle. The protein localises to the secretory vesicle. Its subcellular location is the secreted. It catalyses the reaction Release of protein hormones and neuropeptides from their precursors, generally by hydrolysis of -Lys-Arg-|- bonds.. Functionally, serine endopeptidase which is involved in the processing of hormone and other protein precursors at sites comprised of pairs of basic amino acid residues. Responsible for the release of glucagon from proglucagon in pancreatic A cells. This is Neuroendocrine convertase 2 (PCSK2) from Bos taurus (Bovine).